A 511-amino-acid polypeptide reads, in one-letter code: Histidine ammonia-lyase (511 aa).

The segment at residues A142–G144 is a cross-link (5-imidazolinone (Ala-Gly)). At S143 the chain carries 2,3-didehydroalanine (Ser).

Belongs to the PAL/histidase family. Post-translationally, contains an active site 4-methylidene-imidazol-5-one (MIO), which is formed autocatalytically by cyclization and dehydration of residues Ala-Ser-Gly.

Its subcellular location is the cytoplasm. The catalysed reaction is L-histidine = trans-urocanate + NH4(+). It functions in the pathway amino-acid degradation; L-histidine degradation into L-glutamate; N-formimidoyl-L-glutamate from L-histidine: step 1/3. The chain is Histidine ammonia-lyase from Phenylobacterium zucineum (strain HLK1).